The chain runs to 79 residues: D-alanyl carrier protein (79 aa).

Positions 1-77 (MSIEETVIEL…KIVQGVEELQ (77 aa)) constitute a Carrier domain. O-(pantetheine 4'-phosphoryl)serine is present on Ser-35.

This sequence belongs to the DltC family. Post-translationally, 4'-phosphopantetheine is transferred from CoA to a specific serine of apo-DCP.

It localises to the cytoplasm. Its pathway is cell wall biogenesis; lipoteichoic acid biosynthesis. Functionally, carrier protein involved in the D-alanylation of lipoteichoic acid (LTA). The loading of thioester-linked D-alanine onto DltC is catalyzed by D-alanine--D-alanyl carrier protein ligase DltA. The DltC-carried D-alanyl group is further transferred to cell membrane phosphatidylglycerol (PG) by forming an ester bond, probably catalyzed by DltD. D-alanylation of LTA plays an important role in modulating the properties of the cell wall in Gram-positive bacteria, influencing the net charge of the cell wall. The protein is D-alanyl carrier protein of Streptococcus pyogenes serotype M1.